The sequence spans 291 residues: ATP synthase gamma chain (291 aa).

This sequence belongs to the ATPase gamma chain family. As to quaternary structure, F-type ATPases have 2 components, CF(1) - the catalytic core - and CF(0) - the membrane proton channel. CF(1) has five subunits: alpha(3), beta(3), gamma(1), delta(1), epsilon(1). CF(0) has three main subunits: a, b and c.

It localises to the cell membrane. Functionally, produces ATP from ADP in the presence of a proton gradient across the membrane. The gamma chain is believed to be important in regulating ATPase activity and the flow of protons through the CF(0) complex. The sequence is that of ATP synthase gamma chain from Streptococcus uberis (strain ATCC BAA-854 / 0140J).